A 560-amino-acid polypeptide reads, in one-letter code: Dihydroxy-acid dehydratase (560 aa).

Cys52 is a [2Fe-2S] cluster binding site. Asp84 is a binding site for Mg(2+). Cys125 provides a ligand contact to [2Fe-2S] cluster. Mg(2+)-binding residues include Asp126 and Lys127. Position 127 is an N6-carboxylysine (Lys127). [2Fe-2S] cluster is bound at residue Cys197. Glu448 is a Mg(2+) binding site. Ser474 functions as the Proton acceptor in the catalytic mechanism.

It belongs to the IlvD/Edd family. Homodimer. It depends on [2Fe-2S] cluster as a cofactor. Mg(2+) is required as a cofactor.

The catalysed reaction is (2R)-2,3-dihydroxy-3-methylbutanoate = 3-methyl-2-oxobutanoate + H2O. The enzyme catalyses (2R,3R)-2,3-dihydroxy-3-methylpentanoate = (S)-3-methyl-2-oxopentanoate + H2O. Its pathway is amino-acid biosynthesis; L-isoleucine biosynthesis; L-isoleucine from 2-oxobutanoate: step 3/4. It participates in amino-acid biosynthesis; L-valine biosynthesis; L-valine from pyruvate: step 3/4. Functionally, functions in the biosynthesis of branched-chain amino acids. Catalyzes the dehydration of (2R,3R)-2,3-dihydroxy-3-methylpentanoate (2,3-dihydroxy-3-methylvalerate) into 2-oxo-3-methylpentanoate (2-oxo-3-methylvalerate) and of (2R)-2,3-dihydroxy-3-methylbutanoate (2,3-dihydroxyisovalerate) into 2-oxo-3-methylbutanoate (2-oxoisovalerate), the penultimate precursor to L-isoleucine and L-valine, respectively. The chain is Dihydroxy-acid dehydratase from Francisella tularensis subsp. tularensis (strain WY96-3418).